Reading from the N-terminus, the 342-residue chain is Aspartate carbamoyltransferase catalytic subunit (342 aa).

2 residues coordinate carbamoyl phosphate: Arg59 and Thr60. Residue Lys87 participates in L-aspartate binding. 3 residues coordinate carbamoyl phosphate: Arg109, His142, and Gln145. Positions 182 and 253 each coordinate L-aspartate. Residues Gly294 and Pro295 each coordinate carbamoyl phosphate.

The protein belongs to the aspartate/ornithine carbamoyltransferase superfamily. ATCase family. As to quaternary structure, heterododecamer (2C3:3R2) of six catalytic PyrB chains organized as two trimers (C3), and six regulatory PyrI chains organized as three dimers (R2).

It carries out the reaction carbamoyl phosphate + L-aspartate = N-carbamoyl-L-aspartate + phosphate + H(+). It functions in the pathway pyrimidine metabolism; UMP biosynthesis via de novo pathway; (S)-dihydroorotate from bicarbonate: step 2/3. Catalyzes the condensation of carbamoyl phosphate and aspartate to form carbamoyl aspartate and inorganic phosphate, the committed step in the de novo pyrimidine nucleotide biosynthesis pathway. This is Aspartate carbamoyltransferase catalytic subunit from Synechococcus sp. (strain WH7803).